We begin with the raw amino-acid sequence, 772 residues long: Endoplasmic reticulum membrane sensor NFE2L1 (772 aa).

The chain crosses the membrane as a helical; Signal-anchor for type II membrane protein span at residues 7 to 24 (YFTEGLIQFTILLSLIGV). Positions 191–199 (IFDYSHRQK) are cholesterol recognition/amino acid consensus (CRAC) region. Residues 198-216 (QKESEVDKELSDGRERGDG) show a composition bias toward basic and acidic residues. The interval 198-223 (QKESEVDKELSDGRERGDGWRSAGGQ) is disordered. 8 N-linked (GlcNAc...) asparagine glycosylation sites follow: asparagine 332, asparagine 340, asparagine 362, asparagine 402, asparagine 407, asparagine 414, asparagine 425, and asparagine 429. The disordered stretch occupies residues 472 to 531 (EEEFDSDSGLSLDSGHSPASLSSSEASSSSSSSSSSSSSSSSSSSSFSEEGAVGYSSDSE). Positions 478 to 519 (DSGLSLDSGHSPASLSSSEASSSSSSSSSSSSSSSSSSSSFS) are enriched in low complexity. Residue asparagine 574 is glycosylated (N-linked (GlcNAc...) asparagine). The segment at 581–613 (PGTLDPEEPKLPSVGKKSSKEKPSEFLDKQMSR) is disordered. Residues 598–613 (SSKEKPSEFLDKQMSR) show a composition bias toward basic and acidic residues. Positions 654–717 (LIRDIRRRGK…RQMKQKVQNL (64 aa)) constitute a bZIP domain. The tract at residues 656–675 (RDIRRRGKNKMAAQNCRKRK) is basic motif. The leucine-zipper stretch occupies residues 682 to 696 (LERDVEDLQRDKSKL). The short motif at 761 to 768 (RRQERKQK) is the Nuclear localization signal element.

This sequence belongs to the bZIP family. CNC subfamily. In terms of assembly, interacts (via the bZIP domain) with small MAF protein (MAFF, MAFG or MAFK); required for binding to antioxidant response elements (AREs) on DNA. In terms of processing, cleaved at Leu-104 following retrotranslocation, releasing the protein from the endoplasmic reticulum membrane and forming the transcription factor NRF1 that translocates into the nucleus.

The protein localises to the endoplasmic reticulum membrane. It localises to the nucleus. Endoplasmic reticulum membrane sensor that translocates into the nucleus in response to various stresses to act as a transcription factor. Constitutes a precursor of the transcription factor NRF1. Able to detect various cellular stresses, such as cholesterol excess, oxidative stress or proteasome inhibition. In response to stress, it is released from the endoplasmic reticulum membrane following cleavage and translocates into the nucleus to form the transcription factor NRF1. Acts as a key sensor of cholesterol excess: in excess cholesterol conditions, the endoplasmic reticulum membrane form of the protein directly binds cholesterol via its CRAC motif, preventing cleavage and release of the transcription factor NRF1, thereby allowing expression of genes promoting cholesterol removal. Involved in proteasome homeostasis: in response to proteasome inhibition, it is released from the endoplasmic reticulum membrane, translocates to the nucleus and activates expression of genes encoding proteasome subunits. Its function is as follows. CNC-type bZIP family transcription factor that translocates to the nucleus and regulates expression of target genes in response to various stresses. Heterodimerizes with small-Maf proteins (MAFF, MAFG or MAFK) and binds DNA motifs including the antioxidant response elements (AREs), which regulate expression of genes involved in oxidative stress response. Activates or represses expression of target genes, depending on the context. Plays a key role in cholesterol homeostasis by acting as a sensor of cholesterol excess: in low cholesterol conditions, translocates into the nucleus and represses expression of genes involved in defense against cholesterol excess. In excess cholesterol conditions, the endoplasmic reticulum membrane form of the protein directly binds cholesterol via its CRAC motif, preventing cleavage and release of the transcription factor NRF1, thereby allowing expression of genes promoting cholesterol removal. Critical for redox balance in response to oxidative stress: acts by binding the AREs motifs on promoters and mediating activation of oxidative stress response genes. Involved in proteasome homeostasis: in response to proteasome inhibition, mediates the 'bounce-back' of proteasome subunits by translocating into the nucleus and activating expression of genes encoding proteasome subunits. In Gallus gallus (Chicken), this protein is Endoplasmic reticulum membrane sensor NFE2L1.